A 162-amino-acid polypeptide reads, in one-letter code: 2-C-methyl-D-erythritol 2,4-cyclodiphosphate synthase (162 aa).

2 residues coordinate a divalent metal cation: Asp10 and His12. Residues 10-12 (DVH) and 36-37 (HS) each bind 4-CDP-2-C-methyl-D-erythritol 2-phosphate. Residue His44 coordinates a divalent metal cation. 4-CDP-2-C-methyl-D-erythritol 2-phosphate-binding positions include 58 to 60 (DIG), 63 to 67 (FSDTD), and Arg144.

This sequence belongs to the IspF family. Homotrimer. A divalent metal cation is required as a cofactor.

It carries out the reaction 4-CDP-2-C-methyl-D-erythritol 2-phosphate = 2-C-methyl-D-erythritol 2,4-cyclic diphosphate + CMP. Its pathway is isoprenoid biosynthesis; isopentenyl diphosphate biosynthesis via DXP pathway; isopentenyl diphosphate from 1-deoxy-D-xylulose 5-phosphate: step 4/6. Involved in the biosynthesis of isopentenyl diphosphate (IPP) and dimethylallyl diphosphate (DMAPP), two major building blocks of isoprenoid compounds. Catalyzes the conversion of 4-diphosphocytidyl-2-C-methyl-D-erythritol 2-phosphate (CDP-ME2P) to 2-C-methyl-D-erythritol 2,4-cyclodiphosphate (ME-CPP) with a corresponding release of cytidine 5-monophosphate (CMP). The sequence is that of 2-C-methyl-D-erythritol 2,4-cyclodiphosphate synthase from Burkholderia thailandensis (strain ATCC 700388 / DSM 13276 / CCUG 48851 / CIP 106301 / E264).